The following is a 411-amino-acid chain: Serpin A3-5 (411 aa).

Positions Met1–Cys24 are cleaved as a signal peptide. Residues Asn100, Asn180, Asn230, Asn264, and Asn318 are each glycosylated (N-linked (GlcNAc...) asparagine).

The protein belongs to the serpin family. In terms of assembly, homodimer.

It is found in the cytoplasmic vesicle. It localises to the secretory vesicle. Its subcellular location is the chromaffin granule. The protein localises to the secreted. Its function is as follows. Serine protease inhibitor. In Bos taurus (Bovine), this protein is Serpin A3-5.